Reading from the N-terminus, the 129-residue chain is Serum amyloid A-4 protein (129 aa).

The N-terminal stretch at 1–18 is a signal peptide; that stretch reads MKLLIGILFCTLIMGVTG. Over residues 107 to 121 the composition is skewed to basic and acidic residues; the sequence is AEEWGRSGQDPDHFR. Residues 107–129 are disordered; the sequence is AEEWGRSGQDPDHFRPAGLPKKY.

The protein belongs to the SAA family. In terms of assembly, apolipoprotein of the HDL complex.

The protein localises to the secreted. Its function is as follows. Major acute phase reactant. This is Serum amyloid A-4 protein from Bos taurus (Bovine).